We begin with the raw amino-acid sequence, 115 residues long: Large ribosomal subunit protein uL22 (115 aa).

It belongs to the universal ribosomal protein uL22 family. Part of the 50S ribosomal subunit.

In terms of biological role, this protein binds specifically to 23S rRNA; its binding is stimulated by other ribosomal proteins, e.g. L4, L17, and L20. It is important during the early stages of 50S assembly. It makes multiple contacts with different domains of the 23S rRNA in the assembled 50S subunit and ribosome. The globular domain of the protein is located near the polypeptide exit tunnel on the outside of the subunit, while an extended beta-hairpin is found that lines the wall of the exit tunnel in the center of the 70S ribosome. In Endomicrobium trichonymphae, this protein is Large ribosomal subunit protein uL22.